Consider the following 434-residue polypeptide: UDP-N-acetylglucosamine 1-carboxyvinyltransferase (434 aa).

Residue 22 to 23 (KN) coordinates phosphoenolpyruvate. R97 contacts UDP-N-acetyl-alpha-D-glucosamine. D121 functions as the Proton donor in the catalytic mechanism. Positions 319 and 341 each coordinate UDP-N-acetyl-alpha-D-glucosamine.

The protein belongs to the EPSP synthase family. MurA subfamily.

The protein localises to the cytoplasm. The catalysed reaction is phosphoenolpyruvate + UDP-N-acetyl-alpha-D-glucosamine = UDP-N-acetyl-3-O-(1-carboxyvinyl)-alpha-D-glucosamine + phosphate. It participates in cell wall biogenesis; peptidoglycan biosynthesis. Its function is as follows. Cell wall formation. Adds enolpyruvyl to UDP-N-acetylglucosamine. In Bacteroides thetaiotaomicron (strain ATCC 29148 / DSM 2079 / JCM 5827 / CCUG 10774 / NCTC 10582 / VPI-5482 / E50), this protein is UDP-N-acetylglucosamine 1-carboxyvinyltransferase.